The following is a 328-amino-acid chain: Arylacetonitrilase (328 aa).

A CN hydrolase domain is found at 5–278; that stretch reads VRVAVTQAEP…EGIIYADLDF (274 aa). The active-site Proton acceptor is Glu45. The active site involves Lys125. Cys160 serves as the catalytic Nucleophile.

The protein belongs to the carbon-nitrogen hydrolase superfamily. Nitrilase family.

It carries out the reaction a nitrile + 2 H2O = a carboxylate + NH4(+). It catalyses the reaction 4-chlorophenylacetonitrile + 2 H2O = 4-chlorophenylacetate + NH4(+). In terms of biological role, nitrilase that hydrolyzes preferentially phenylacetonitrile, (R,S)-mandelonitrile, and 3-indolylacetonitrile. The polypeptide is Arylacetonitrilase (Aspergillus niger (strain ATCC MYA-4892 / CBS 513.88 / FGSC A1513)).